The primary structure comprises 207 residues: LexA repressor (207 aa).

Residues 28-48 constitute a DNA-binding region (H-T-H motif); it reads VREIGEAVGLASSFTVHGHLS. Catalysis depends on for autocatalytic cleavage activity residues Ser130 and Lys168.

This sequence belongs to the peptidase S24 family. Homodimer.

It catalyses the reaction Hydrolysis of Ala-|-Gly bond in repressor LexA.. Represses a number of genes involved in the response to DNA damage (SOS response), including recA and lexA. In the presence of single-stranded DNA, RecA interacts with LexA causing an autocatalytic cleavage which disrupts the DNA-binding part of LexA, leading to derepression of the SOS regulon and eventually DNA repair. The sequence is that of LexA repressor from Staphylococcus aureus (strain Newman).